A 237-amino-acid polypeptide reads, in one-letter code: Ribosomal RNA small subunit methyltransferase G (237 aa).

S-adenosyl-L-methionine contacts are provided by residues Gly-78, Phe-83, 129–130 (AE), and Arg-146.

The protein belongs to the methyltransferase superfamily. RNA methyltransferase RsmG family.

It is found in the cytoplasm. In terms of biological role, specifically methylates the N7 position of a guanine in 16S rRNA. This Mesoplasma florum (strain ATCC 33453 / NBRC 100688 / NCTC 11704 / L1) (Acholeplasma florum) protein is Ribosomal RNA small subunit methyltransferase G.